A 268-amino-acid polypeptide reads, in one-letter code: Aliphatic sulfonates import ATP-binding protein SsuB 2 (268 aa).

One can recognise an ABC transporter domain in the interval 15-236 (LAVRKLQKTF…VRGSHRLAAL (222 aa)). An ATP-binding site is contributed by 47-54 (GRSGCGKS).

The protein belongs to the ABC transporter superfamily. Aliphatic sulfonates importer (TC 3.A.1.17.2) family. The complex is composed of two ATP-binding proteins (SsuB), two transmembrane proteins (SsuC) and a solute-binding protein (SsuA).

Its subcellular location is the cell inner membrane. It carries out the reaction ATP + H2O + aliphatic sulfonate-[sulfonate-binding protein]Side 1 = ADP + phosphate + aliphatic sulfonateSide 2 + [sulfonate-binding protein]Side 1.. Part of the ABC transporter complex SsuABC involved in aliphatic sulfonates import. Responsible for energy coupling to the transport system. This Pseudomonas fluorescens (strain ATCC BAA-477 / NRRL B-23932 / Pf-5) protein is Aliphatic sulfonates import ATP-binding protein SsuB 2.